The sequence spans 95 residues: MTTLRKLLLVGALLGAGAGVGTALFALVTPGEERKQAMLKEMPEQYPQRRDEAARTKELLLATLQEAAATQENVAWRKNWMSGGGGGGGGGGRSA.

Topologically, residues 1 to 7 (MTTLRKL) are mitochondrial matrix. Residues 8–28 (LLVGALLGAGAGVGTALFALV) traverse the membrane as a helical segment. A mediates lipid-binding region spans residues 23-80 (ALFALVTPGEERKQAMLKEMPEQYPQRRDEAARTKELLLATLQEAAATQENVAWRKNW). The Mitochondrial intermembrane segment spans residues 29 to 95 (TPGEERKQAM…GGGGGGGRSA (67 aa)).

Belongs to the UQCC3 family. In terms of assembly, associates with the ubiquinol-cytochrome c reductase complex (mitochondrial respiratory chain complex III(CIII) or cytochrome b-c1 complex). Interacts with UQCC1. Forms a complex, named COMC, composed of UQCC1, UQCC2; UQCC3 and UQCC4; mediates MT-CYB hemylation and association with the first nuclear-encoded complex III subunit UQCRQ. Probably cleaved by OMA1 under mitochondrial stress conditions.

The protein localises to the mitochondrion inner membrane. Its function is as follows. Required for the assembly of the ubiquinol-cytochrome c reductase complex (mitochondrial respiratory chain complex III or cytochrome b-c1 complex), mediating cytochrome b recruitment and probably stabilization within the complex. Thereby, plays an important role in ATP production by mitochondria. Cardiolipin-binding protein, it may also control the cardiolipin composition of mitochondria membranes and their morphology. The chain is Ubiquinol-cytochrome-c reductase complex assembly factor 3 from Bos taurus (Bovine).